Consider the following 165-residue polypeptide: Large ribosomal subunit protein uL10 (165 aa).

It belongs to the universal ribosomal protein uL10 family. In terms of assembly, part of the ribosomal stalk of the 50S ribosomal subunit. The N-terminus interacts with L11 and the large rRNA to form the base of the stalk. The C-terminus forms an elongated spine to which L12 dimers bind in a sequential fashion forming a multimeric L10(L12)X complex.

In terms of biological role, forms part of the ribosomal stalk, playing a central role in the interaction of the ribosome with GTP-bound translation factors. The chain is Large ribosomal subunit protein uL10 from Serratia proteamaculans (strain 568).